The chain runs to 335 residues: tRNA N6-adenosine threonylcarbamoyltransferase (335 aa).

Residues His111 and His115 each coordinate Fe cation. Residues 134–138, Asp167, Gly180, and Asn270 contribute to the substrate site; that span reads LISGG. Fe cation is bound at residue Asp298.

It belongs to the KAE1 / TsaD family. Fe(2+) serves as cofactor.

The protein resides in the cytoplasm. It catalyses the reaction L-threonylcarbamoyladenylate + adenosine(37) in tRNA = N(6)-L-threonylcarbamoyladenosine(37) in tRNA + AMP + H(+). Functionally, required for the formation of a threonylcarbamoyl group on adenosine at position 37 (t(6)A37) in tRNAs that read codons beginning with adenine. Is involved in the transfer of the threonylcarbamoyl moiety of threonylcarbamoyl-AMP (TC-AMP) to the N6 group of A37, together with TsaE and TsaB. TsaD likely plays a direct catalytic role in this reaction. The chain is tRNA N6-adenosine threonylcarbamoyltransferase from Nitrosococcus oceani (strain ATCC 19707 / BCRC 17464 / JCM 30415 / NCIMB 11848 / C-107).